The following is a 312-amino-acid chain: Malate dehydrogenase (312 aa).

NAD(+) contacts are provided by residues 7–13 (GAAGGIG) and Asp34. Substrate is bound by residues Arg81 and Arg87. Residues Asn94 and 117 to 119 (ITN) contribute to the NAD(+) site. Substrate contacts are provided by Asn119 and Arg153. The active-site Proton acceptor is His177. NAD(+) is bound at residue Met227.

Belongs to the LDH/MDH superfamily. MDH type 1 family. As to quaternary structure, homodimer.

The catalysed reaction is (S)-malate + NAD(+) = oxaloacetate + NADH + H(+). Catalyzes the reversible oxidation of malate to oxaloacetate. This chain is Malate dehydrogenase (mdh), found in Moritella sp. (strain 5710).